Reading from the N-terminus, the 327-residue chain is Aspartate--ammonia ligase (327 aa).

The protein belongs to the class-II aminoacyl-tRNA synthetase family. AsnA subfamily.

The protein localises to the cytoplasm. The enzyme catalyses L-aspartate + NH4(+) + ATP = L-asparagine + AMP + diphosphate + H(+). The protein operates within amino-acid biosynthesis; L-asparagine biosynthesis; L-asparagine from L-aspartate (ammonia route): step 1/1. The chain is Aspartate--ammonia ligase from Bacillus anthracis (strain A0248).